The following is a 259-amino-acid chain: Phosphatidylglycerol--prolipoprotein diacylglyceryl transferase (259 aa).

The next 4 helical transmembrane spans lie at 16-36, 55-75, 92-112, and 117-137; these read FAIS…WFYA, FITY…VLLY, QGGM…YLFC, and VNFL…LFLG. A 1,2-diacyl-sn-glycero-3-phospho-(1'-sn-glycerol) is bound at residue Arg138. 3 consecutive transmembrane segments (helical) span residues 172-192, 201-221, and 228-248; these read QLYE…YATF, ALNL…IEIF, and IGFI…MLIL.

The protein belongs to the Lgt family.

Its subcellular location is the cell inner membrane. It catalyses the reaction L-cysteinyl-[prolipoprotein] + a 1,2-diacyl-sn-glycero-3-phospho-(1'-sn-glycerol) = an S-1,2-diacyl-sn-glyceryl-L-cysteinyl-[prolipoprotein] + sn-glycerol 1-phosphate + H(+). It functions in the pathway protein modification; lipoprotein biosynthesis (diacylglyceryl transfer). Its function is as follows. Catalyzes the transfer of the diacylglyceryl group from phosphatidylglycerol to the sulfhydryl group of the N-terminal cysteine of a prolipoprotein, the first step in the formation of mature lipoproteins. In Rickettsia canadensis (strain McKiel), this protein is Phosphatidylglycerol--prolipoprotein diacylglyceryl transferase.